A 367-amino-acid polypeptide reads, in one-letter code: Porin Omp2a (367 aa).

Residues 1–22 form the signal peptide; sequence MNIKSLLLGSAAALVAASGAQA.

Belongs to the alphaproteobacteria porin family. In terms of assembly, monomer.

The protein resides in the cell outer membrane. In terms of biological role, forms passive diffusion pores that allow small molecular weight hydrophilic materials across the outer membrane. This is Porin Omp2a (omp2a) from Brucella suis.